The chain runs to 242 residues: Transcription factor bHLH100 (242 aa).

The bHLH domain maps to 61–113 (MKKLNHNASERERRKKINTMFSSLRSCLPPTNQTKKLSVSATVSQALKYIPEL).

In terms of assembly, homodimer. As to expression, expressed constitutively in roots, leaves, and stems.

It localises to the nucleus. Plays a role in metal homeostasis. Confers tolerance to high zinc (Zn) and nickel (Ni). This chain is Transcription factor bHLH100 (BHLH100), found in Arabidopsis thaliana (Mouse-ear cress).